Consider the following 77-residue polypeptide: U8-lycotoxin-Ls1e (77 aa).

Positions 1 to 20 are cleaved as a signal peptide; sequence MKLIIFTGLVLFAIVSLIEA. Positions 21-26 are excised as a propeptide; that stretch reads QAENEK.

This sequence belongs to the neurotoxin 19 (CSTX) family. 08 (U8-Lctx) subfamily. In terms of processing, contains 4 disulfide bonds. In terms of tissue distribution, expressed by the venom gland.

The protein resides in the secreted. The sequence is that of U8-lycotoxin-Ls1e from Lycosa singoriensis (Wolf spider).